We begin with the raw amino-acid sequence, 562 residues long: NAD-dependent malic enzyme (562 aa).

Catalysis depends on tyrosine 101, which acts as the Proton donor. NAD(+) is bound at residue arginine 154. The active-site Proton acceptor is the lysine 172. Glutamate 243, aspartate 244, and aspartate 267 together coordinate a divalent metal cation. Residues aspartate 267 and asparagine 415 each contribute to the NAD(+) site.

This sequence belongs to the malic enzymes family. In terms of assembly, homotetramer. Mg(2+) is required as a cofactor. It depends on Mn(2+) as a cofactor.

It carries out the reaction (S)-malate + NAD(+) = pyruvate + CO2 + NADH. The enzyme catalyses oxaloacetate + H(+) = pyruvate + CO2. The chain is NAD-dependent malic enzyme from Shewanella woodyi (strain ATCC 51908 / MS32).